The following is a 318-amino-acid chain: BES1/BZR1 homolog protein 2 (318 aa).

Residues 1 to 13 are compositionally biased toward gly residues; it reads MAAGGGGGGGGSS. Disordered regions lie at residues 1-34, 84-133, 166-195, and 209-231; these read MAAG…RRRR, FKPP…PSPS, NSAP…PNGG, and APSS…CDES. Residues 16–97 form a required for DNA-binding region; sequence RTPTWKEREN…ASDISGTPTN (82 aa). Residues 91-101 are compositionally biased toward polar residues; it reads ISGTPTNFSTN. Residues 102–133 are compositionally biased toward low complexity; it reads SSIQPSPQSSAFPSPAPSYHGSPVSSSFPSPS.

This sequence belongs to the BZR/LAT61 family. Post-translationally, phosphorylated. Phosphorylation increases protein degradation.

This chain is BES1/BZR1 homolog protein 2 (BEH2), found in Arabidopsis thaliana (Mouse-ear cress).